Here is a 205-residue protein sequence, read N- to C-terminus: Tumor suppressor candidate gene 1 protein homolog (205 aa).

Residues 1-12 (MWRMRGGATRRG) are compositionally biased toward low complexity. A disordered region spans residues 1-49 (MWRMRGGATRRGSCGGEGGGSRGESGRLGRAREGGGGGGGVGWRGRAGG). Residues 13-23 (SCGGEGGGSRG) are compositionally biased toward gly residues. The span at 24-33 (ESGRLGRARE) shows a compositional bias: basic and acidic residues. Positions 34 to 48 (GGGGGGGVGWRGRAG) are enriched in gly residues. The stretch at 66-110 (LEALRARDERDRQNARLREENARLRLENRRLRRENRSLFRQALRL) forms a coiled coil. Disordered regions lie at residues 113–149 (DSGEREAAVETLAPDEPATNRKARGHGREEEPGSPRA) and 174–205 (GARPPGAIEEPPLQETATGLCAHDPDVPRPWL). Ser-146 is subject to Phosphoserine. The segment covering 196 to 205 (HDPDVPRPWL) has biased composition (basic and acidic residues).

The chain is Tumor suppressor candidate gene 1 protein homolog (Tusc1) from Mus musculus (Mouse).